Here is a 136-residue protein sequence, read N- to C-terminus: uncharacterized protein (136 aa).

Residues 1-33 (MRDHLPPGLPPDPFADDPCDPSAALEAVEPGQP) are disordered.

To M.leprae ML0386.

This is an uncharacterized protein from Mycobacterium tuberculosis (strain CDC 1551 / Oshkosh).